We begin with the raw amino-acid sequence, 696 residues long: Elongation factor G (696 aa).

A tr-type G domain is found at 8 to 290 (ERYRNIGISA…KVIELMPAPT (283 aa)). Residues 17 to 24 (AHIDAGKT), 88 to 92 (DTPGH), and 142 to 145 (NKMD) each bind GTP.

This sequence belongs to the TRAFAC class translation factor GTPase superfamily. Classic translation factor GTPase family. EF-G/EF-2 subfamily.

The protein localises to the cytoplasm. Its function is as follows. Catalyzes the GTP-dependent ribosomal translocation step during translation elongation. During this step, the ribosome changes from the pre-translocational (PRE) to the post-translocational (POST) state as the newly formed A-site-bound peptidyl-tRNA and P-site-bound deacylated tRNA move to the P and E sites, respectively. Catalyzes the coordinated movement of the two tRNA molecules, the mRNA and conformational changes in the ribosome. This is Elongation factor G from Thiobacillus denitrificans (strain ATCC 25259 / T1).